We begin with the raw amino-acid sequence, 249 residues long: MSRRYDSRTTIFSPEGRLYQVEYAMEAIGNAGSAIGISSKDGVVLVGEKKVTSKLLQTSTSSEKMYKIDDHVACAVAGIMSDANILINTARVQAQRYTFSYQEPMPVEQLVQSLCDTKQGYTQYGGLPPFGVSFLFAGWDKNFGFQLFMSDPSGNYAGWKAAAIGANNQAAQSMLKQDYKDDITREEAVQLALKVLSKTMDSTSLTSEKLELAEVFLSNGKVKYQACSPEKLNSMLVKSGLTQPSAEES.

Belongs to the peptidase T1A family. In terms of assembly, the 26S proteasome consists of a 20S proteasome core and two 19S regulatory subunits. The 20S proteasome core is composed of 28 subunits that are arranged in four stacked rings, resulting in a barrel-shaped structure. The two end rings are each formed by seven alpha subunits, and the two central rings are each formed by seven beta subunits. The catalytic chamber with the active sites is on the inside of the barrel.

The protein localises to the cytoplasm. It localises to the nucleus. Functionally, the proteasome is a multicatalytic proteinase complex which is characterized by its ability to cleave peptides with Arg, Phe, Tyr, Leu, and Glu adjacent to the leaving group at neutral or slightly basic pH. The proteasome has an ATP-dependent proteolytic activity. The protein is Proteasome subunit alpha type-4 (PAC1) of Petunia hybrida (Petunia).